The primary structure comprises 51 residues: Putative inactivation escape 1 protein (51 aa).

Highly expressed in pancreas, heart and liver followed by brain, placenta, lung, skeletal muscle and kidney. Mostly expressed in females.

The polypeptide is Putative inactivation escape 1 protein (INE1) (Homo sapiens (Human)).